The chain runs to 355 residues: Protein RecA (355 aa).

67–74 (GPESSGKT) serves as a coordination point for ATP.

This sequence belongs to the RecA family.

Its subcellular location is the cytoplasm. Its function is as follows. Can catalyze the hydrolysis of ATP in the presence of single-stranded DNA, the ATP-dependent uptake of single-stranded DNA by duplex DNA, and the ATP-dependent hybridization of homologous single-stranded DNAs. It interacts with LexA causing its activation and leading to its autocatalytic cleavage. This Shewanella baltica (strain OS195) protein is Protein RecA.